Here is an 87-residue protein sequence, read N- to C-terminus: uncharacterized protein (87 aa).

The helical transmembrane segment at 25–47 threads the bilayer; that stretch reads FFWEVCNMILFIIIALCGYLLFS.

Its subcellular location is the membrane. This is an uncharacterized protein from Bacillus subtilis (strain 168).